Here is a 251-residue protein sequence, read N- to C-terminus: Imidazole glycerol phosphate synthase subunit HisF (251 aa).

Active-site residues include D11 and D130.

Belongs to the HisA/HisF family. In terms of assembly, heterodimer of HisH and HisF.

It is found in the cytoplasm. The catalysed reaction is 5-[(5-phospho-1-deoxy-D-ribulos-1-ylimino)methylamino]-1-(5-phospho-beta-D-ribosyl)imidazole-4-carboxamide + L-glutamine = D-erythro-1-(imidazol-4-yl)glycerol 3-phosphate + 5-amino-1-(5-phospho-beta-D-ribosyl)imidazole-4-carboxamide + L-glutamate + H(+). It functions in the pathway amino-acid biosynthesis; L-histidine biosynthesis; L-histidine from 5-phospho-alpha-D-ribose 1-diphosphate: step 5/9. Its function is as follows. IGPS catalyzes the conversion of PRFAR and glutamine to IGP, AICAR and glutamate. The HisF subunit catalyzes the cyclization activity that produces IGP and AICAR from PRFAR using the ammonia provided by the HisH subunit. This chain is Imidazole glycerol phosphate synthase subunit HisF, found in Chlorobium limicola (strain DSM 245 / NBRC 103803 / 6330).